The sequence spans 625 residues: UvrABC system protein C (625 aa).

The 80-residue stretch at 13–92 (DKPGVYIMKD…IKKHRPKFNI (80 aa)) folds into the GIY-YIG domain. Positions 204–239 (EDIIKKLEKDMKEAADNLEFERAARIRDKINSLKHI) constitute a UVR domain.

The protein belongs to the UvrC family. Interacts with UvrB in an incision complex.

It localises to the cytoplasm. Functionally, the UvrABC repair system catalyzes the recognition and processing of DNA lesions. UvrC both incises the 5' and 3' sides of the lesion. The N-terminal half is responsible for the 3' incision and the C-terminal half is responsible for the 5' incision. The polypeptide is UvrABC system protein C (Acetivibrio thermocellus (strain ATCC 27405 / DSM 1237 / JCM 9322 / NBRC 103400 / NCIMB 10682 / NRRL B-4536 / VPI 7372) (Clostridium thermocellum)).